Reading from the N-terminus, the 146-residue chain is uncharacterized protein (146 aa).

The N-terminal stretch at 1–26 (MQFRPSIALVLSIVGILSLEISWTDG) is a signal peptide.

As to expression, prismatic layer of shell (at protein level). Expressed primarily in the mantle with highest level in the mantle edge and lower level in the mantle pallium.

The protein localises to the secreted. This is an uncharacterized protein from Margaritifera margaritifera (Freshwater pearl mussel).